A 295-amino-acid chain; its full sequence is Protoheme IX farnesyltransferase (295 aa).

Transmembrane regions (helical) follow at residues 27-47, 48-68, 94-114, 117-137, 144-164, 171-191, 216-236, 241-261, and 272-292; these read LVVF…HPFL, ALIS…INMW, SALE…AIAV, ISAA…TIWL, NIVI…AVVT, SFIL…ALSL, KHIL…ALFL, FYLS…ISVI, and MFSY…FCSI.

This sequence belongs to the UbiA prenyltransferase family. Protoheme IX farnesyltransferase subfamily.

It is found in the cell membrane. It carries out the reaction heme b + (2E,6E)-farnesyl diphosphate + H2O = Fe(II)-heme o + diphosphate. Its pathway is porphyrin-containing compound metabolism; heme O biosynthesis; heme O from protoheme: step 1/1. Functionally, converts heme B (protoheme IX) to heme O by substitution of the vinyl group on carbon 2 of heme B porphyrin ring with a hydroxyethyl farnesyl side group. The sequence is that of Protoheme IX farnesyltransferase from Wolbachia pipientis subsp. Culex pipiens (strain wPip).